The primary structure comprises 527 residues: NAD(P)H-quinone oxidoreductase chain 4 1 (527 aa).

14 helical membrane-spanning segments follow: residues 5-25 (FPWLTTIILFPIVASLLLPII), 35-55 (WYSLIVGLIDFAIIIAAFCTG), 90-110 (LIILTGFITTLAIMAAWPVSF), 112-132 (PKLFYFLMLAMYGGQIAVFAV), 136-156 (LLFFLVWELELVPVYLILSIW), 168-188 (FILYTAGGSLFILIAALTMAF), 211-231 (LLLYAAFLIAYAVKLPIFPLH), 242-262 (TAPAHMLLAGILLKMGGYALL), 274-294 (AVFAPVLVILGVVNIVYAALT), 310-330 (ISHMGFVLIGMASFTDIGLSG), 331-351 (AVLQMISHGLIGASLFFLVGA), 386-406 (LALPGMSGFVAEVMVFIGFAT), 416-436 (VLVIFLSAVGVILTPIYLLSM), and 463-483 (VFIIGCLLVPIIGIGLYPKIV).

The protein belongs to the complex I subunit 4 family.

Its subcellular location is the cellular thylakoid membrane. It catalyses the reaction a plastoquinone + NADH + (n+1) H(+)(in) = a plastoquinol + NAD(+) + n H(+)(out). It carries out the reaction a plastoquinone + NADPH + (n+1) H(+)(in) = a plastoquinol + NADP(+) + n H(+)(out). Functionally, NDH-1 shuttles electrons from NAD(P)H, via FMN and iron-sulfur (Fe-S) centers, to quinones in the respiratory chain. The immediate electron acceptor for the enzyme in this species is believed to be plastoquinone. Couples the redox reaction to proton translocation (for every two electrons transferred, four hydrogen ions are translocated across the cytoplasmic membrane), and thus conserves the redox energy in a proton gradient. The polypeptide is NAD(P)H-quinone oxidoreductase chain 4 1 (Trichodesmium erythraeum (strain IMS101)).